The primary structure comprises 364 residues: MEINIITNKINKLIQRKKDLKRYLDYVAKSTRILEIDLELSSTEIWKKKEYVHNLNKEKNLLNIIINKINNIEKNIKEMIIFLDLAIETKDNAIIQEISEEIKKIAEKIQELEFYRMFSNQHDHCNCYIDVQAGSGGVDAQDWSKILLRMYLKWSDKKGFKTEIIEESTGEIVGIKSSTIKVSGQYAFGWLRTETGIHRLIRKSPFDSGKRRHTSFSSIFIYPDIEDKINIEINPSDLRIDVYRASGAGGQHVNRTESAVRITHLPTNIVTQCQNNRSQHKNKEQAIKQMKSKLYEMKIKEKKEKQKKIEKNKSDISWGNQIRSYILDNSKIKDLRTGVEKYNVQSVLDGDLDDFIEQSLIMGL.

The residue at position 251 (glutamine 251) is an N5-methylglutamine.

The protein belongs to the prokaryotic/mitochondrial release factor family. Post-translationally, methylated by PrmC. Methylation increases the termination efficiency of RF2.

Its subcellular location is the cytoplasm. Functionally, peptide chain release factor 2 directs the termination of translation in response to the peptide chain termination codons UGA and UAA. This Buchnera aphidicola subsp. Schizaphis graminum (strain Sg) protein is Peptide chain release factor 2 (prfB).